We begin with the raw amino-acid sequence, 174 residues long: Crossover junction endodeoxyribonuclease RuvC (174 aa).

Active-site residues include Asp-8, Glu-67, and Asp-139. 3 residues coordinate Mg(2+): Asp-8, Glu-67, and Asp-139.

The protein belongs to the RuvC family. Homodimer which binds Holliday junction (HJ) DNA. The HJ becomes 2-fold symmetrical on binding to RuvC with unstacked arms; it has a different conformation from HJ DNA in complex with RuvA. In the full resolvosome a probable DNA-RuvA(4)-RuvB(12)-RuvC(2) complex forms which resolves the HJ. The cofactor is Mg(2+).

Its subcellular location is the cytoplasm. The enzyme catalyses Endonucleolytic cleavage at a junction such as a reciprocal single-stranded crossover between two homologous DNA duplexes (Holliday junction).. The RuvA-RuvB-RuvC complex processes Holliday junction (HJ) DNA during genetic recombination and DNA repair. Endonuclease that resolves HJ intermediates. Cleaves cruciform DNA by making single-stranded nicks across the HJ at symmetrical positions within the homologous arms, yielding a 5'-phosphate and a 3'-hydroxyl group; requires a central core of homology in the junction. The consensus cleavage sequence is 5'-(A/T)TT(C/G)-3'. Cleavage occurs on the 3'-side of the TT dinucleotide at the point of strand exchange. HJ branch migration catalyzed by RuvA-RuvB allows RuvC to scan DNA until it finds its consensus sequence, where it cleaves and resolves the cruciform DNA. This Pseudomonas fluorescens (strain ATCC BAA-477 / NRRL B-23932 / Pf-5) protein is Crossover junction endodeoxyribonuclease RuvC.